A 54-amino-acid polypeptide reads, in one-letter code: Salt stress-induced hydrophobic peptide ESI3 (54 aa).

Helical transmembrane passes span 2–22 (GSAT…GVFL) and 34–54 (LLLT…VLVV).

This sequence belongs to the UPF0057 (PMP3) family.

It localises to the membrane. In Thinopyrum elongatum (Tall wheatgrass), this protein is Salt stress-induced hydrophobic peptide ESI3 (ESI3).